Reading from the N-terminus, the 35-residue chain is Cytochrome b6-f complex subunit 7 (35 aa).

Residues 9–27 (AGLSIVLTLVGVALGYGIL) traverse the membrane as a helical segment.

This sequence belongs to the PetM family. As to quaternary structure, the 4 large subunits of the cytochrome b6-f complex are cytochrome b6, subunit IV (17 kDa polypeptide, PetD), cytochrome f and the Rieske protein, while the 4 small subunits are PetG, PetL, PetM and PetN. The complex functions as a dimer.

Its subcellular location is the cellular thylakoid membrane. Functionally, component of the cytochrome b6-f complex, which mediates electron transfer between photosystem II (PSII) and photosystem I (PSI), cyclic electron flow around PSI, and state transitions. The polypeptide is Cytochrome b6-f complex subunit 7 (Synechococcus sp. (strain JA-3-3Ab) (Cyanobacteria bacterium Yellowstone A-Prime)).